An 80-amino-acid polypeptide reads, in one-letter code: uncharacterized protein (80 aa).

This is an uncharacterized protein from Vaccinia virus (strain Copenhagen) (VACV).